We begin with the raw amino-acid sequence, 422 residues long: MASLPVSFAKPDKNGVITCKAIMLKEAKLPGMSYADTVQIIDIQVDPPQNVELRVKMLCASVCRTDILTIEGFMAPTQFPKINGHEGVGIIESMGPDTKNFKVGDVIVAPTLGECQVCSSCRSGRTNFCQNYGANESALEPDGTSRFSYIDSDGKKKLLYYKLGCSTWTQYMVVDSNYATKLNEIAPELPPPHGSILSCAFATGYGAVWLDAAVQEGDSVAIFGVGSVGISAVIAAKELKAKQIIVVDRNEYKLKMAMELGATHCINSEKLPEGVTPSQAVRKLTPKEVGVDASIESSGYDVFMNEAMKAAIHGKAKTVITGEGIYENDRIFFDFKDFLFGGNVVGNVTGRVRIHSDFPGLLRKAQEPVIRAGMDKILGYDAATMKCKYEVDIREGTPALLKALEEVENVDCVKLVIKLNDY.

Zn(2+) is bound by residues C63, H85, C115, C118, C121, C129, and C199.

This sequence belongs to the zinc-containing alcohol dehydrogenase family. As to quaternary structure, homodimer. Zn(2+) is required as a cofactor.

The catalysed reaction is (2R)-2-hydroxy-2-methylbutanenitrile = butan-2-one + hydrogen cyanide. Involved in the catabolism of cyanogenic glycosides. Naturally occurring substrates are the aliphatic acetone cyanohydrin and butan-2-one cyanohydrin, which are the aglycones of the cyanogenic glycosides linamarin, lotaustralin, linustatin and neolinustatin. Can use various aliphatic ketones and aldehydes as substrates, but not aromatic ketones. This Linum usitatissimum (Flax) protein is Aliphatic (R)-hydroxynitrile lyase.